A 222-amino-acid chain; its full sequence is Putative N-acetylmannosamine-6-phosphate 2-epimerase (222 aa).

This sequence belongs to the NanE family.

It carries out the reaction an N-acyl-D-glucosamine 6-phosphate = an N-acyl-D-mannosamine 6-phosphate. Its pathway is amino-sugar metabolism; N-acetylneuraminate degradation; D-fructose 6-phosphate from N-acetylneuraminate: step 3/5. Functionally, converts N-acetylmannosamine-6-phosphate (ManNAc-6-P) to N-acetylglucosamine-6-phosphate (GlcNAc-6-P). The sequence is that of Putative N-acetylmannosamine-6-phosphate 2-epimerase from Staphylococcus saprophyticus subsp. saprophyticus (strain ATCC 15305 / DSM 20229 / NCIMB 8711 / NCTC 7292 / S-41).